We begin with the raw amino-acid sequence, 837 residues long: MTQVTVKELAQVVDTPVERLLLQMRDAGLPHTSAEQVVTDSEKQALLTHLKGSHGDRASEPRKITLQRKTTTTLKVGGSKTVSVEVRKKKTYVKRSPDEIEAERQRELEEQRAAEEAERLKAEEAAARQRAEEEARKAEEAARAKAAEEAVSAQPAAAVEVAAAEPVAKPAAAEERKKEEPRRVPKRDEDDERRDRKHTQHRPSVKEKEKAPAPRVAPRSTDEESDGYRRGGRGGKSKLKKRNQHGFQNPTGPIVREVNIGETITVAELAAQMSVKGAEVVKFMFKMGSPVTINQVLDQETAQLVAEELGHKVKLVSENALEEQLAESLKFEGEAVTRAPVVTVMGHVDHGKTSLLDYIRRAKVAAGEAGGITQHIGAYHVETERGMVTFLDTPGHAAFTAMRARGAQATDIVILVVAADDGVMPQTQEAVQHAKAAGVPIVVAVNKIDKPEANPDNIKNGLAALDVIPEEWGGDAPFVPVSAKLGTGVDELLEAVLLQAEVLELKATPSAPGRGVVVESRLDKGRGPVATVLVQDGTLRQGDMVLVGINYGRVRAMLDENGKPIKEAGPSIPVEILGLDGTPDAGDEMTVVADEKKAREVALFRQGKFREVKLARAHAGKLENIFENMGQEEKKTLNIVLKADVRGSLEALQGSLSGLGNDEVQVRVVGGGVGGITESDANLALASNAVLFGFNVRADAGARKIVEAEGLDMRYYNVIYDIIEDVKKALTGMLGSDLRENILGIAEVRDVFRSPKFGAIAGCMVTEGMVHRNRPIRVLRDDVVIFEGELESLRRFKDDVAEVRAGMECGIGVKSYNDVKVGDKIEVFEKVEVARSL.

The segment at 94-253 (KRSPDEIEAE…QHGFQNPTGP (160 aa)) is disordered. Over residues 95–148 (RSPDEIEAERQRELEEQRAAEEAERLKAEEAAARQRAEEEARKAEEAARAKAAE) the composition is skewed to basic and acidic residues. The span at 149 to 171 (EAVSAQPAAAVEVAAAEPVAKPA) shows a compositional bias: low complexity. 2 stretches are compositionally biased toward basic and acidic residues: residues 172-188 (AAEERKKEEPRRVPKRD) and 220-229 (STDEESDGYR). Basic residues predominate over residues 230-244 (RGGRGGKSKLKKRNQ). The 170-residue stretch at 337–506 (TRAPVVTVMG…LLQAEVLELK (170 aa)) folds into the tr-type G domain. The segment at 346-353 (GHVDHGKT) is G1. 346-353 (GHVDHGKT) provides a ligand contact to GTP. The tract at residues 371-375 (GITQH) is G2. The G3 stretch occupies residues 392–395 (DTPG). Residues 392–396 (DTPGH) and 446–449 (NKID) each bind GTP. Residues 446 to 449 (NKID) are G4. The tract at residues 482-484 (SAK) is G5.

This sequence belongs to the TRAFAC class translation factor GTPase superfamily. Classic translation factor GTPase family. IF-2 subfamily.

The protein resides in the cytoplasm. In terms of biological role, one of the essential components for the initiation of protein synthesis. Protects formylmethionyl-tRNA from spontaneous hydrolysis and promotes its binding to the 30S ribosomal subunits. Also involved in the hydrolysis of GTP during the formation of the 70S ribosomal complex. This chain is Translation initiation factor IF-2, found in Pseudomonas paraeruginosa (strain DSM 24068 / PA7) (Pseudomonas aeruginosa (strain PA7)).